We begin with the raw amino-acid sequence, 305 residues long: Virulence plasmid integrase pGP7-D (305 aa).

One can recognise a Core-binding (CB) domain in the interval 13 to 99 (LTFGDASEIW…CYISFTKFLY (87 aa)). Residues 127-305 (IKTESISKQE…SPLVQTPPIL (179 aa)) form the Tyr recombinase domain. Residues K188 and R257 contribute to the active site. Y289 (O-(3'-phospho-DNA)-tyrosine intermediate) is an active-site residue.

It belongs to the 'phage' integrase family.

The polypeptide is Virulence plasmid integrase pGP7-D (Chlamydia trachomatis serovar L2 (strain ATCC VR-902B / DSM 19102 / 434/Bu)).